A 303-amino-acid chain; its full sequence is Phosphoglycerate mutase 3 (303 aa).

Residues 13-20 (RHGQSELN), 26-27 (CG), arginine 70, 120-123 (ERHY), lysine 131, and 147-148 (RR) each bind substrate. The Tele-phosphohistidine intermediate role is filled by histidine 14. The active-site Proton donor/acceptor is the glutamate 120. The tract at residues 168–198 (NDQGSSTGYDFKEPNRHLKYGPEEKANERLP) is disordered. Positions 177–198 (DFKEPNRHLKYGPEEKANERLP) are enriched in basic and acidic residues. A substrate-binding site is contributed by 236 to 237 (GS).

It belongs to the phosphoglycerate mutase family. BPG-dependent PGAM subfamily.

It catalyses the reaction (2R)-2-phosphoglycerate = (2R)-3-phosphoglycerate. It functions in the pathway carbohydrate degradation; glycolysis; pyruvate from D-glyceraldehyde 3-phosphate: step 3/5. Could be non-functional. In Saccharomyces cerevisiae (strain ATCC 204508 / S288c) (Baker's yeast), this protein is Phosphoglycerate mutase 3 (GPM3).